The chain runs to 156 residues: MNEHISSLLNEDCVRHIMCFLTDKEKGKFCLTCRDLLYLIKDVKFNDPVNKDNIEHLSYKKNFNCTYKISTVQDTNNRPISCFKIDFPNNKPTIIQKVVLPTNQTGNTFTFRLDENAFEKLLEHEDKVHKAITLIEQSITENESKKYPRLSLIQKY.

The F-box domain maps to 4–51 (HISSLLNEDCVRHIMCFLTDKEKGKFCLTCRDLLYLIKDVKFNDPVNK).

The polypeptide is Putative F-box protein R637 (Acanthamoeba polyphaga mimivirus (APMV)).